The chain runs to 492 residues: KAT8 regulatory NSL complex subunit 2 (492 aa).

A Glycyl lysine isopeptide (Lys-Gly) (interchain with G-Cter in SUMO2) cross-link involves residue K78. The segment at 127–182 is disordered; that stretch reads LGSQTPESSRSEASRILDEDSWSDGEQEPITVDQTWRGDPDSEADSIDSDQEDPLK. A Phosphothreonine modification is found at T131. Basic and acidic residues predominate over residues 135 to 144; the sequence is SRSEASRILD. Residues S147, S149, S168, S172, and S175 each carry the phosphoserine modification. A compositionally biased stretch (acidic residues) spans 167-178; sequence DSEADSIDSDQE. Residues 308–364 are required for interaction with other NSL complex members; sequence DVRCSNQSLPMTRHCLTHICQDTNQVLFKCCQGSEEVPCNKPVPVSLSEDPCCPLHF. The disordered stretch occupies residues 455–492; sequence AGDGCRSQGSRNSEKGSAPLSQSGLATANGKPEPTSIS.

In terms of assembly, component of the NSL complex at least composed of KAT8/MOF, KANSL1, KANSL2, KANSL3, MCRS1, PHF20, OGT1/OGT, WDR5 and HCFC1.

It localises to the nucleus. The protein resides in the mitochondrion. In terms of biological role, non-catalytic component of the NSL histone acetyltransferase complex, a multiprotein complex that mediates histone H4 acetylation at 'Lys-5'- and 'Lys-8' (H4K5ac and H4K8ac) at transcription start sites and promotes transcription initiation. Required for NSL complex stability and for transcription of intraciliary transport genes in both ciliated and non-ciliated cells by regulating histone H4 acetylation at 'Lys-5'- and 'Lys-12' (H4K5ac and H4K12ac). This is necessary for cilium assembly in ciliated cells and for organization of the microtubule cytoskeleton in non-ciliated cells. Required within the NSL complex to maintain nuclear architecture stability by promoting KAT8-mediated acetylation of lamin LMNA. The sequence is that of KAT8 regulatory NSL complex subunit 2 (KANSL2) from Pongo abelii (Sumatran orangutan).